The chain runs to 91 residues: MVVGEGLLSAARFALRVVACGNALSLALKSNLGRSFSSFPAWAEYLITDSFESSGTFESDGGGGRITQRCALRPSGRCLRQRSLAGARVEP.

In Escherichia coli O157:H7, this protein is Protein YchS (ychS).